The primary structure comprises 368 residues: Phosphoribosylaminoimidazole-succinocarboxamide synthase (368 aa).

This sequence belongs to the SAICAR synthetase family.

The enzyme catalyses 5-amino-1-(5-phospho-D-ribosyl)imidazole-4-carboxylate + L-aspartate + ATP = (2S)-2-[5-amino-1-(5-phospho-beta-D-ribosyl)imidazole-4-carboxamido]succinate + ADP + phosphate + 2 H(+). It participates in purine metabolism; IMP biosynthesis via de novo pathway; 5-amino-1-(5-phospho-D-ribosyl)imidazole-4-carboxamide from 5-amino-1-(5-phospho-D-ribosyl)imidazole-4-carboxylate: step 1/2. This Vibrio cholerae serotype O1 (strain ATCC 39315 / El Tor Inaba N16961) protein is Phosphoribosylaminoimidazole-succinocarboxamide synthase.